The primary structure comprises 223 residues: Phosphoribosylformylglycinamidine synthase subunit PurQ (223 aa).

The 221-residue stretch at 3 to 223 (FAVLVFPGSN…MVKSWREQHV (221 aa)) folds into the Glutamine amidotransferase type-1 domain. Residue Cys85 is the Nucleophile of the active site. Active-site residues include His193 and Glu195.

Part of the FGAM synthase complex composed of 1 PurL, 1 PurQ and 2 PurS subunits.

The protein resides in the cytoplasm. The enzyme catalyses N(2)-formyl-N(1)-(5-phospho-beta-D-ribosyl)glycinamide + L-glutamine + ATP + H2O = 2-formamido-N(1)-(5-O-phospho-beta-D-ribosyl)acetamidine + L-glutamate + ADP + phosphate + H(+). It catalyses the reaction L-glutamine + H2O = L-glutamate + NH4(+). It functions in the pathway purine metabolism; IMP biosynthesis via de novo pathway; 5-amino-1-(5-phospho-D-ribosyl)imidazole from N(2)-formyl-N(1)-(5-phospho-D-ribosyl)glycinamide: step 1/2. Functionally, part of the phosphoribosylformylglycinamidine synthase complex involved in the purines biosynthetic pathway. Catalyzes the ATP-dependent conversion of formylglycinamide ribonucleotide (FGAR) and glutamine to yield formylglycinamidine ribonucleotide (FGAM) and glutamate. The FGAM synthase complex is composed of three subunits. PurQ produces an ammonia molecule by converting glutamine to glutamate. PurL transfers the ammonia molecule to FGAR to form FGAM in an ATP-dependent manner. PurS interacts with PurQ and PurL and is thought to assist in the transfer of the ammonia molecule from PurQ to PurL. The chain is Phosphoribosylformylglycinamidine synthase subunit PurQ from Staphylococcus aureus (strain USA300).